A 358-amino-acid chain; its full sequence is DNA replication and repair protein RecF (358 aa).

30 to 37 is a binding site for ATP; sequence GNNGSGKT.

Belongs to the RecF family.

The protein localises to the cytoplasm. The RecF protein is involved in DNA metabolism; it is required for DNA replication and normal SOS inducibility. RecF binds preferentially to single-stranded, linear DNA. It also seems to bind ATP. This Histophilus somni (strain 2336) (Haemophilus somnus) protein is DNA replication and repair protein RecF.